A 121-amino-acid chain; its full sequence is Ribosome-binding factor A (121 aa).

Belongs to the RbfA family. Monomer. Binds 30S ribosomal subunits, but not 50S ribosomal subunits or 70S ribosomes.

The protein resides in the cytoplasm. In terms of biological role, one of several proteins that assist in the late maturation steps of the functional core of the 30S ribosomal subunit. Associates with free 30S ribosomal subunits (but not with 30S subunits that are part of 70S ribosomes or polysomes). Required for efficient processing of 16S rRNA. May interact with the 5'-terminal helix region of 16S rRNA. This is Ribosome-binding factor A from Lactobacillus acidophilus (strain ATCC 700396 / NCK56 / N2 / NCFM).